The following is a 546-amino-acid chain: Phosphoglucomutase (546 aa).

The Phosphoserine intermediate role is filled by Ser-135. 4 residues coordinate Mg(2+): Ser-135, Asp-288, Asp-290, and Asp-292.

The protein belongs to the phosphohexose mutase family. Mg(2+) serves as cofactor.

It carries out the reaction alpha-D-glucose 1-phosphate = alpha-D-glucose 6-phosphate. It participates in glycolipid metabolism; diglucosyl-diacylglycerol biosynthesis. Functionally, catalyzes the interconversion between glucose-6-phosphate and alpha-glucose-1-phosphate. This is the first step in the biosynthesis of diglucosyl-diacylglycerol (Glc2-DAG), i.e. a glycolipid found in the membrane, which is also used as a membrane anchor for lipoteichoic acid (LTA). The polypeptide is Phosphoglucomutase (pgcA) (Staphylococcus epidermidis (strain ATCC 35984 / DSM 28319 / BCRC 17069 / CCUG 31568 / BM 3577 / RP62A)).